Here is a 268-residue protein sequence, read N- to C-terminus: Glucosamine-6-phosphate deaminase (268 aa).

Aspartate 67 serves as the catalytic Proton acceptor; for enolization step. Asparagine 137 serves as the catalytic For ring-opening step. The active-site Proton acceptor; for ring-opening step is the histidine 139. Glutamate 144 (for ring-opening step) is an active-site residue.

This sequence belongs to the glucosamine/galactosamine-6-phosphate isomerase family. NagB subfamily. In terms of assembly, homohexamer.

The catalysed reaction is alpha-D-glucosamine 6-phosphate + H2O = beta-D-fructose 6-phosphate + NH4(+). It participates in amino-sugar metabolism; N-acetylneuraminate degradation; D-fructose 6-phosphate from N-acetylneuraminate: step 5/5. Catalyzes the reversible isomerization-deamination of glucosamine 6-phosphate (GlcN6P) to form fructose 6-phosphate (Fru6P) and ammonium ion. This Pseudoalteromonas translucida (strain TAC 125) protein is Glucosamine-6-phosphate deaminase.